Consider the following 809-residue polypeptide: Eukaryotic translation initiation factor 3 subunit C (809 aa).

Residues 1–102 form a disordered region; the sequence is MSRFFAASYE…DSDESDEASK (102 aa). Composition is skewed to acidic residues over residues 18–30 and 37–59; these read SEED…EEEL and SEEE…DSDD. The region spanning 605–780 is the PCI domain; that stretch reads FHEHINLDLI…SVLSIAKGAE (176 aa).

Belongs to the eIF-3 subunit C family. In terms of assembly, component of the eukaryotic translation initiation factor 3 (eIF-3) complex.

The protein localises to the cytoplasm. In terms of biological role, component of the eukaryotic translation initiation factor 3 (eIF-3) complex, which is involved in protein synthesis of a specialized repertoire of mRNAs and, together with other initiation factors, stimulates binding of mRNA and methionyl-tRNAi to the 40S ribosome. The eIF-3 complex specifically targets and initiates translation of a subset of mRNAs involved in cell proliferation. The protein is Eukaryotic translation initiation factor 3 subunit C of Vanderwaltozyma polyspora (strain ATCC 22028 / DSM 70294 / BCRC 21397 / CBS 2163 / NBRC 10782 / NRRL Y-8283 / UCD 57-17) (Kluyveromyces polysporus).